Here is an 839-residue protein sequence, read N- to C-terminus: Dynein axonemal assembly factor 5 (839 aa).

HEAT repeat units follow at residues 10–48, 54–92, 94–137, 140–178, 181–219, 221–257, 259–297, 578–617, 675–713, 717–755, and 723–761; these read TSDVTKALARHLNCLNDENKMIRRRALAAIQKEAADEKL, QHVFLELLKPLLRCLSDPMEKCRELSIQIIVYCVSHVPR, EEAL…VCGK, APYLDEMIQIFQRTMVDPFPDVKKESCKCASNYATCIPE, HMQAESLIKPLMQTISHQHSKVRVAVIQTTGTVIQYSSG, SVDDVLSHLAQRLFDDSVQVRQAVTVVVGDWLLKLQD, YSFFHKLIPLLLSSTTDEIPEIRKLALDYWEKIGSQWEK, GETLHLFVPILKMCLQPTREPQMRLKLFTMLSKLLLKASE, LQVEDNLMPRVITTLEEDSKMCRLMSCCIITALLSTCER, PDKLNKIYPELLKRLDDASDEVRVAAAKTLYQWFKCITD, and IYPELLKRLDDASDEVRVAAAKTLYQWFKCITDEYERTT.

The protein belongs to the DNAAF5 family. Interacts with DNAI2; probably involved in outer arm dynein assembly.

The protein resides in the cytoplasm. The protein localises to the dynein axonemal particle. Functionally, cytoplasmic protein involved in the delivery of the dynein machinery to the motile cilium. It is required for the assembly of the axonemal dynein inner and outer arms, two structures attached to the peripheral outer doublet A microtubule of the axoneme, that play a crucial role in cilium motility. This Xenopus laevis (African clawed frog) protein is Dynein axonemal assembly factor 5.